The following is a 619-amino-acid chain: MSSFGKNSSYRDTGASLKELGDYLDSKQEGKPTHQKTIGFDTNTSPVSIPTIISPPLGSNNSNYGKSPKSSYDNKQTSPLLSASNNRKNNNNNNNNNNATSPKDSSIIGKNNVNSDLSKVSSSLNELKFEKQPIGSTSSTPTSTPSSTPSSSTPSSTPSTPNTNSQQQQQQQQQQKKQQQQQPKQPQQPKQQSKQQATQQDKKDKEQQQQQQDKQDKESNEIKGSKEVAKDGQHGVKQFDDPKQRGKITKKKIIKVGESSRSVQLFNHLPQYNSEFSMGVSVSTDEPNEKYPIHPDIISLGLKYAEFKIAGSNARAIAMMTAFIQIFKDYVAAPDKVYSRELDSLLKRNIQFLVDCRPISISMGNSINYVKHKLSLTNNMSHEGARDYLIKSINEFIERIQMADNAIVKHGCSKINDGDVILTYASSHVVELIIQQAIQDKKKFRLIIVDSRPKHEGRELLHRLVLHGVKITYIMLHAVSYIMKEVTKVFVGAYSVLSNGNLISRSGTSLVASMAKFYNVPFIVCCETYKFTERVQLDSICFNQIGNPQDLVQNLGEKEGSKSLLENWESYSTLKLLNLMYDLTPIELIDMVITEFGMLPPTSIPVVLREYRKEVISIN.

Positions 21–32 are enriched in basic and acidic residues; it reads GDYLDSKQEGKP. The segment at 21–251 is disordered; the sequence is GDYLDSKQEG…PKQRGKITKK (231 aa). Residues 42–56 show a composition bias toward low complexity; that stretch reads TNTSPVSIPTIISPP. The segment covering 57-84 has biased composition (polar residues); the sequence is LGSNNSNYGKSPKSSYDNKQTSPLLSAS. Over residues 85-98 the composition is skewed to low complexity; sequence NNRKNNNNNNNNNN. Residues 99–125 are compositionally biased toward polar residues; that stretch reads ATSPKDSSIIGKNNVNSDLSKVSSSLN. Over residues 136–199 the composition is skewed to low complexity; sequence STSSTPTSTP…KQQSKQQATQ (64 aa). Over residues 200–244 the composition is skewed to basic and acidic residues; it reads QDKKDKEQQQQQQDKQDKESNEIKGSKEVAKDGQHGVKQFDDPKQ.

The protein belongs to the eIF-2B alpha/beta/delta subunits family. Component of the translation initiation factor 2B (eIF2B) complex which is a heterodecamer of two sets of five different subunits: alpha, beta, gamma, delta and epsilon. Subunits alpha, beta and delta comprise a regulatory subcomplex and subunits epsilon and gamma comprise a catalytic subcomplex. Within the complex, the hexameric regulatory complex resides at the center, with the two heterodimeric catalytic subcomplexes bound on opposite sides.

Its subcellular location is the cytoplasm. The protein resides in the cytosol. Acts as a component of the translation initiation factor 2B (eIF2B) complex, which catalyzes the exchange of GDP for GTP on eukaryotic initiation factor 2 (eIF2) gamma subunit. Its guanine nucleotide exchange factor activity is repressed when bound to eIF2 complex phosphorylated on the alpha subunit, thereby limiting the amount of methionyl-initiator methionine tRNA available to the ribosome and consequently global translation is repressed. This is Translation initiation factor eIF2B subunit delta (eif2b4) from Dictyostelium discoideum (Social amoeba).